The chain runs to 298 residues: Oxygen-dependent coproporphyrinogen-III oxidase (298 aa).

S92 contacts substrate. 2 residues coordinate a divalent metal cation: H96 and H106. Catalysis depends on H106, which acts as the Proton donor. 108 to 110 contributes to the substrate binding site; the sequence is NVR. 2 residues coordinate a divalent metal cation: H145 and H175. An important for dimerization region spans residues 239 to 274; the sequence is YVEFNLVYDRGTLFGLQSGGRSESILMSLPPRVRWE. Position 257–259 (257–259) interacts with substrate; it reads GGR.

Belongs to the aerobic coproporphyrinogen-III oxidase family. Homodimer. It depends on a divalent metal cation as a cofactor.

The protein localises to the cytoplasm. It carries out the reaction coproporphyrinogen III + O2 + 2 H(+) = protoporphyrinogen IX + 2 CO2 + 2 H2O. It participates in porphyrin-containing compound metabolism; protoporphyrin-IX biosynthesis; protoporphyrinogen-IX from coproporphyrinogen-III (O2 route): step 1/1. Its function is as follows. Involved in the heme biosynthesis. Catalyzes the aerobic oxidative decarboxylation of propionate groups of rings A and B of coproporphyrinogen-III to yield the vinyl groups in protoporphyrinogen-IX. This is Oxygen-dependent coproporphyrinogen-III oxidase from Stenotrophomonas maltophilia (strain R551-3).